Here is a 260-residue protein sequence, read N- to C-terminus: Phosphatidate cytidylyltransferase (260 aa).

7 consecutive transmembrane segments (helical) span residues 9-29 (IIALLIFLPILLKGGLILMLF), 46-66 (MIKFLSIPGLISALALIIIML), 70-90 (AGEWVQVIQLKGLIAMSFIVL), 102-122 (FMDAAFCLMSVAYVGIGFMYF), 130-150 (LRYILFAFLIVWLTDTGAYIF), 172-192 (FFGGILCSILVPLVMQMFVDL), and 196-216 (IWLLLLVTIVLSMFGQLGDLV).

This sequence belongs to the CDS family.

The protein localises to the cell membrane. The enzyme catalyses a 1,2-diacyl-sn-glycero-3-phosphate + CTP + H(+) = a CDP-1,2-diacyl-sn-glycerol + diphosphate. The protein operates within phospholipid metabolism; CDP-diacylglycerol biosynthesis; CDP-diacylglycerol from sn-glycerol 3-phosphate: step 3/3. The sequence is that of Phosphatidate cytidylyltransferase (cdsA) from Staphylococcus epidermidis (strain ATCC 35984 / DSM 28319 / BCRC 17069 / CCUG 31568 / BM 3577 / RP62A).